The chain runs to 540 residues: Thiamine biosynthetic bifunctional enzyme (540 aa).

Residues 1 to 238 are thiamine-phosphate synthase; that stretch reads MVFTKEEVDY…LDATRYQFVE (238 aa). 4-amino-2-methyl-5-(diphosphooxymethyl)pyrimidine is bound by residues 43–47 and Asn75; that span reads QIREK. Residues Asp76 and Asp95 each coordinate Mg(2+). Ser114 provides a ligand contact to 4-amino-2-methyl-5-(diphosphooxymethyl)pyrimidine. Residue 143–145 participates in 2-[(2R,5Z)-2-carboxy-4-methylthiazol-5(2H)-ylidene]ethyl phosphate binding; the sequence is TST. 4-amino-2-methyl-5-(diphosphooxymethyl)pyrimidine is bound at residue Lys146. 2-[(2R,5Z)-2-carboxy-4-methylthiazol-5(2H)-ylidene]ethyl phosphate is bound by residues Gly181 and 209 to 210; that span reads VS. The tract at residues 239–540 is hydroxyethylthiazole kinase; sequence CELNNTFPTT…KWSASLKKFK (302 aa). 5-(2-hydroxyethyl)-4-methylthiazole is bound at residue Met290. The ATP site is built by Lys365 and Thr415. Ala462 contributes to the 5-(2-hydroxyethyl)-4-methylthiazole binding site. The active-site Proton acceptor; for hydroxyethylthiazole kinase activity is the Cys465.

This sequence in the N-terminal section; belongs to the thiamine-phosphate synthase family. In the C-terminal section; belongs to the Thz kinase family. In terms of assembly, homooctamer. Mg(2+) serves as cofactor.

It catalyses the reaction 2-[(2R,5Z)-2-carboxy-4-methylthiazol-5(2H)-ylidene]ethyl phosphate + 4-amino-2-methyl-5-(diphosphooxymethyl)pyrimidine + 2 H(+) = thiamine phosphate + CO2 + diphosphate. It carries out the reaction 2-(2-carboxy-4-methylthiazol-5-yl)ethyl phosphate + 4-amino-2-methyl-5-(diphosphooxymethyl)pyrimidine + 2 H(+) = thiamine phosphate + CO2 + diphosphate. The enzyme catalyses 4-methyl-5-(2-phosphooxyethyl)-thiazole + 4-amino-2-methyl-5-(diphosphooxymethyl)pyrimidine + H(+) = thiamine phosphate + diphosphate. The catalysed reaction is 5-(2-hydroxyethyl)-4-methylthiazole + ATP = 4-methyl-5-(2-phosphooxyethyl)-thiazole + ADP + H(+). The protein operates within cofactor biosynthesis; thiamine diphosphate biosynthesis; 4-methyl-5-(2-phosphoethyl)-thiazole from 5-(2-hydroxyethyl)-4-methylthiazole: step 1/1. Its pathway is cofactor biosynthesis; thiamine diphosphate biosynthesis; thiamine phosphate from 4-amino-2-methyl-5-diphosphomethylpyrimidine and 4-methyl-5-(2-phosphoethyl)-thiazole: step 1/1. Essential for thiamine biosynthesis. The kinase activity is involved in the salvage synthesis of TH-P from the thiazole. Its function is as follows. Condenses 4-methyl-5-(beta-hydroxyethyl)thiazole monophosphate (THZ-P) and 2-methyl-4-amino-5-hydroxymethyl pyrimidine pyrophosphate (HMP-PP) to form thiamine monophosphate (TMP). The polypeptide is Thiamine biosynthetic bifunctional enzyme (THI6) (Saccharomyces cerevisiae (strain ATCC 204508 / S288c) (Baker's yeast)).